The chain runs to 251 residues: 3-deoxy-manno-octulosonate cytidylyltransferase (251 aa).

This sequence belongs to the KdsB family.

The protein localises to the cytoplasm. The catalysed reaction is 3-deoxy-alpha-D-manno-oct-2-ulosonate + CTP = CMP-3-deoxy-beta-D-manno-octulosonate + diphosphate. Its pathway is nucleotide-sugar biosynthesis; CMP-3-deoxy-D-manno-octulosonate biosynthesis; CMP-3-deoxy-D-manno-octulosonate from 3-deoxy-D-manno-octulosonate and CTP: step 1/1. It functions in the pathway bacterial outer membrane biogenesis; lipopolysaccharide biosynthesis. In terms of biological role, activates KDO (a required 8-carbon sugar) for incorporation into bacterial lipopolysaccharide in Gram-negative bacteria. This is 3-deoxy-manno-octulosonate cytidylyltransferase from Brucella ovis (strain ATCC 25840 / 63/290 / NCTC 10512).